Reading from the N-terminus, the 558-residue chain is Armadillo repeat-containing X-linked protein 5 (558 aa).

Basic and acidic residues-rich tracts occupy residues Met1 to Ala14 and Lys139 to Ala156. 2 disordered regions span residues Met1–Thr34 and Lys139–Ser163. ARM repeat units follow at residues Cys300–Pro339, Val422–Lys461, His463–Phe503, and Ser520–Leu558.

It belongs to the eutherian X-chromosome-specific Armcx family.

The polypeptide is Armadillo repeat-containing X-linked protein 5 (ARMCX5) (Pongo abelii (Sumatran orangutan)).